The sequence spans 218 residues: Riboflavin synthase (218 aa).

Lumazine-binding repeat units follow at residues Met1–His97 and Leu98–Ile194. Residues Gly4 to Ile6, Cys48 to Thr50, Asp62 to Thr67, Gly101 to Val103, Lys136, Ser145 to Thr147, and Thr159 to Thr164 each bind 2,4-dihydroxypteridine.

As to quaternary structure, homotrimer.

It catalyses the reaction 2 6,7-dimethyl-8-(1-D-ribityl)lumazine + H(+) = 5-amino-6-(D-ribitylamino)uracil + riboflavin. The protein operates within cofactor biosynthesis; riboflavin biosynthesis; riboflavin from 2-hydroxy-3-oxobutyl phosphate and 5-amino-6-(D-ribitylamino)uracil: step 2/2. Catalyzes the dismutation of two molecules of 6,7-dimethyl-8-ribityllumazine, resulting in the formation of riboflavin and 5-amino-6-(D-ribitylamino)uracil. The chain is Riboflavin synthase (ribE) from Photobacterium leiognathi.